Reading from the N-terminus, the 204-residue chain is Methylthioribulose-1-phosphate dehydratase (204 aa).

The Zn(2+) site is built by H94 and H96.

This sequence belongs to the aldolase class II family. MtnB subfamily. The cofactor is Zn(2+).

The catalysed reaction is 5-(methylsulfanyl)-D-ribulose 1-phosphate = 5-methylsulfanyl-2,3-dioxopentyl phosphate + H2O. It functions in the pathway amino-acid biosynthesis; L-methionine biosynthesis via salvage pathway; L-methionine from S-methyl-5-thio-alpha-D-ribose 1-phosphate: step 2/6. Its function is as follows. Catalyzes the dehydration of methylthioribulose-1-phosphate (MTRu-1-P) into 2,3-diketo-5-methylthiopentyl-1-phosphate (DK-MTP-1-P). This chain is Methylthioribulose-1-phosphate dehydratase, found in Pseudomonas savastanoi pv. phaseolicola (strain 1448A / Race 6) (Pseudomonas syringae pv. phaseolicola (strain 1448A / Race 6)).